A 642-amino-acid polypeptide reads, in one-letter code: Threonine--tRNA ligase (642 aa).

A TGS domain is found at 1-61; it reads MPVITLPDGS…ETDAELSIIT (61 aa). The tract at residues 243–534 is catalytic; sequence DHRKIGKQLD…LIEEYAGRFP (292 aa). Zn(2+) is bound by residues cysteine 334, histidine 385, and histidine 511.

This sequence belongs to the class-II aminoacyl-tRNA synthetase family. Homodimer. It depends on Zn(2+) as a cofactor.

The protein localises to the cytoplasm. It catalyses the reaction tRNA(Thr) + L-threonine + ATP = L-threonyl-tRNA(Thr) + AMP + diphosphate + H(+). In terms of biological role, catalyzes the attachment of threonine to tRNA(Thr) in a two-step reaction: L-threonine is first activated by ATP to form Thr-AMP and then transferred to the acceptor end of tRNA(Thr). Also edits incorrectly charged L-seryl-tRNA(Thr). The polypeptide is Threonine--tRNA ligase (Shewanella putrefaciens (strain CN-32 / ATCC BAA-453)).